Here is a 202-residue protein sequence, read N- to C-terminus: Dephospho-CoA kinase (202 aa).

The region spanning 4 to 202 (FLGLTGGIAT…EGVCHKSGMS (199 aa)) is the DPCK domain. 12–17 (ATGKTT) contacts ATP.

Belongs to the CoaE family.

The protein localises to the cytoplasm. It catalyses the reaction 3'-dephospho-CoA + ATP = ADP + CoA + H(+). It functions in the pathway cofactor biosynthesis; coenzyme A biosynthesis; CoA from (R)-pantothenate: step 5/5. In terms of biological role, catalyzes the phosphorylation of the 3'-hydroxyl group of dephosphocoenzyme A to form coenzyme A. This Latilactobacillus sakei subsp. sakei (strain 23K) (Lactobacillus sakei subsp. sakei) protein is Dephospho-CoA kinase.